Reading from the N-terminus, the 503-residue chain is Maturase K (503 aa).

Belongs to the intron maturase 2 family. MatK subfamily.

The protein localises to the plastid. It is found in the chloroplast. Usually encoded in the trnK tRNA gene intron. Probably assists in splicing its own and other chloroplast group II introns. The polypeptide is Maturase K (Eucalyptus globulus subsp. globulus (Tasmanian blue gum)).